The chain runs to 1085 residues: Translation factor GUF1 homolog, mitochondrial (1085 aa).

Residues 232-409 enclose the tr-type G domain; sequence KYIRNFCILA…RIISDIPPPI (178 aa). GTP is bound by residues 241-248, 302-306, and 356-359; these read AHIDSGKS, DTPGH, and NKID.

Belongs to the TRAFAC class translation factor GTPase superfamily. Classic translation factor GTPase family. LepA subfamily.

Its subcellular location is the mitochondrion inner membrane. The catalysed reaction is GTP + H2O = GDP + phosphate + H(+). In terms of biological role, promotes mitochondrial protein synthesis. May act as a fidelity factor of the translation reaction, by catalyzing a one-codon backward translocation of tRNAs on improperly translocated ribosomes. Binds to mitochondrial ribosomes in a GTP-dependent manner. This Plasmodium falciparum (isolate 3D7) protein is Translation factor GUF1 homolog, mitochondrial.